We begin with the raw amino-acid sequence, 381 residues long: Pentraxin-related protein PTX3 (381 aa).

The N-terminal stretch at 1–17 (MHLLAILFCALWSAVLA) is a signal peptide. Coiled-coil stretches lie at residues 74 to 101 (LQATDDVLRGELQRLREELGRLAESLAR) and 143 to 167 (EEAGRALAAVLEELRQTRADLHAVQ). Intrachain disulfides connect Cys179/Cys357 and Cys210/Cys271. Positions 179–381 (CETAILFPMR…QPHGGAQYVS (203 aa)) constitute a Pentraxin (PTX) domain. Asn220 is a glycosylation site (N-linked (GlcNAc...) asparagine).

Homooctamer; disulfide-linked. Binds to C1q. In terms of assembly, (Microbial infection) Interacts with SARS coronavirus-2/SARS-CoV-2 Nucleoprotein and Spike protein homotrimer. Post-translationally, glycosylated.

The protein localises to the secreted. Plays a role in the regulation of innate resistance to pathogens, inflammatory reactions, possibly clearance of self-components and female fertility. This chain is Pentraxin-related protein PTX3, found in Homo sapiens (Human).